The sequence spans 156 residues: Arginine repressor (156 aa).

It belongs to the ArgR family.

The protein localises to the cytoplasm. It participates in amino-acid biosynthesis; L-arginine biosynthesis [regulation]. Its function is as follows. Regulates arginine biosynthesis genes. The sequence is that of Arginine repressor from Escherichia coli O81 (strain ED1a).